We begin with the raw amino-acid sequence, 79 residues long: Small ribosomal subunit protein bS21 (79 aa).

The disordered stretch occupies residues 59–79 (RKKMQREGLLPMKPKPVVGVR).

Belongs to the bacterial ribosomal protein bS21 family.

The sequence is that of Small ribosomal subunit protein bS21 from Methylocella silvestris (strain DSM 15510 / CIP 108128 / LMG 27833 / NCIMB 13906 / BL2).